Here is a 189-residue protein sequence, read N- to C-terminus: Elongation factor P (189 aa).

N6-(3,6-diaminohexanoyl)-5-hydroxylysine is present on Lys-34.

It belongs to the elongation factor P family. May be beta-lysylated on the epsilon-amino group of Lys-34 by the combined action of EpmA and EpmB, and then hydroxylated on the C5 position of the same residue by EpmC (if this protein is present). Lysylation is critical for the stimulatory effect of EF-P on peptide-bond formation. The lysylation moiety may extend toward the peptidyltransferase center and stabilize the terminal 3-CCA end of the tRNA. Hydroxylation of the C5 position on Lys-34 may allow additional potential stabilizing hydrogen-bond interactions with the P-tRNA.

The protein localises to the cytoplasm. It participates in protein biosynthesis; polypeptide chain elongation. Functionally, involved in peptide bond synthesis. Alleviates ribosome stalling that occurs when 3 or more consecutive Pro residues or the sequence PPG is present in a protein, possibly by augmenting the peptidyl transferase activity of the ribosome. Modification of Lys-34 is required for alleviation. The chain is Elongation factor P from Francisella tularensis subsp. novicida (strain U112).